Reading from the N-terminus, the 256-residue chain is Chlorophyll a-b binding protein CP24 10A, chloroplastic (256 aa).

2 helical membrane-spanning segments follow: residues 106–126 (WAMA…IPWF) and 134–154 (AIAP…MGWV).

The protein belongs to the ELIP/psbS family.

It is found in the plastid. Its subcellular location is the chloroplast thylakoid membrane. This chain is Chlorophyll a-b binding protein CP24 10A, chloroplastic (CAP10A), found in Solanum lycopersicum (Tomato).